Reading from the N-terminus, the 224-residue chain is 7-cyano-7-deazaguanine synthase (224 aa).

12-22 (LSGGLDSSTVT) serves as a coordination point for ATP. Residues C193, C201, C204, and C207 each contribute to the Zn(2+) site.

Belongs to the QueC family. Zn(2+) serves as cofactor.

It catalyses the reaction 7-carboxy-7-deazaguanine + NH4(+) + ATP = 7-cyano-7-deazaguanine + ADP + phosphate + H2O + H(+). Its pathway is purine metabolism; 7-cyano-7-deazaguanine biosynthesis. Catalyzes the ATP-dependent conversion of 7-carboxy-7-deazaguanine (CDG) to 7-cyano-7-deazaguanine (preQ(0)). This Prochlorococcus marinus subsp. pastoris (strain CCMP1986 / NIES-2087 / MED4) protein is 7-cyano-7-deazaguanine synthase.